Consider the following 1828-residue polypeptide: Unconventional myosin-Va (1828 aa).

An N-acetylalanine modification is found at alanine 2. The region spanning 8–60 is the Myosin N-terminal SH3-like domain; sequence TKFARVWIPDPEEVWKSAELLKDYKPGDKVLLLHLEEGKDLEYRLDPKTSELP. Positions 69-763 constitute a Myosin motor domain; sequence VGENDLTALS…QVAYLEKLRA (695 aa). 163 to 170 contacts ATP; the sequence is GESGAGKT. The disordered stretch occupies residues 599 to 633; sequence ISPTSATSSGRTPLTRVPVKPTKGRPGQTAKEHKK. Position 600 is a phosphoserine (serine 600). Positions 600–610 are enriched in polar residues; the sequence is SPTSATSSGRT. Residues 643 to 665 form an actin-binding region; that stretch reads LHLLMETLNATTPHYVRCIKPND. IQ domains lie at 766–788, 789–813, 814–836, 837–861, 862–884, and 885–914; these read LRAACIRIQKTIRGWLLRKRYLC, MQRAAITVQRYVRGYQARCYAKFLR, RTKAATTIQKYWRMYVVRRKYKI, RRAATIVLQSYLRGYLARNRYRKIL, REHKAVIIQKRVRGWLARTHYKR, and TMKAIIYLQCCFRRMMAKRELKKLKIEARS. 2 coiled-coil regions span residues 914-1239 and 1314-1418; these read SVER…EVNA and GLKE…ELEV. Threonine 1032 is subject to Phosphothreonine. The disordered stretch occupies residues 1105–1147; the sequence is VPKPGHKRTDSTHSSNESEYTFSSEFAETEDIAPRTEEPTEKK. Residues 1116-1130 show a composition bias toward polar residues; that stretch reads THSSNESEYTFSSEF. Residues 1136-1147 show a composition bias toward basic and acidic residues; the sequence is IAPRTEEPTEKK. Phosphoserine occurs at positions 1425 and 1625. The region spanning 1507–1783 is the Dilute domain; it reads TSTINSIKKV…IRTIQVRLRD (277 aa). A Phosphothreonine modification is found at threonine 1733.

Belongs to the TRAFAC class myosin-kinesin ATPase superfamily. Myosin family. In terms of assembly, may be a homodimer, which associates with multiple calmodulin or myosin light chains. Interacts with RIPL2, the interaction is required for its role in dendrite formation. Interacts with MLPH. Interacts with SYTL4. Interacts with MYRIP. Interacts with RAB10; mediates the transport to the plasma membrane of SLC2A4/GLUT4 storage vesicles. Interacts with FMR1; this interaction occurs in association with polyribosome.

The catalysed reaction is ATP + H2O = ADP + phosphate + H(+). Processive actin-based motor that can move in large steps approximating the 36-nm pseudo-repeat of the actin filament. Can hydrolyze ATP in the presence of actin, which is essential for its function as a motor protein. Involved in melanosome transport. Also mediates the transport of vesicles to the plasma membrane. May also be required for some polarization process involved in dendrite formation. The protein is Unconventional myosin-Va (Myo5a) of Rattus norvegicus (Rat).